A 472-amino-acid chain; its full sequence is Ribulose bisphosphate carboxylase large chain (472 aa).

Residues Asn116 and Thr166 each contribute to the substrate site. The active-site Proton acceptor is the Lys168. Residue Lys170 participates in substrate binding. Mg(2+) contacts are provided by Lys194, Asp196, and Glu197. Lys194 is modified (N6-carboxylysine). Residue His287 is the Proton acceptor of the active site. The substrate site is built by Arg288, His320, and Ser372.

It belongs to the RuBisCO large chain family. Type I subfamily. As to quaternary structure, heterohexadecamer of 8 large chains and 8 small chains. Mg(2+) is required as a cofactor.

The enzyme catalyses 2 (2R)-3-phosphoglycerate + 2 H(+) = D-ribulose 1,5-bisphosphate + CO2 + H2O. The catalysed reaction is D-ribulose 1,5-bisphosphate + O2 = 2-phosphoglycolate + (2R)-3-phosphoglycerate + 2 H(+). RuBisCO catalyzes two reactions: the carboxylation of D-ribulose 1,5-bisphosphate, the primary event in carbon dioxide fixation, as well as the oxidative fragmentation of the pentose substrate. Both reactions occur simultaneously and in competition at the same active site. This chain is Ribulose bisphosphate carboxylase large chain, found in Nitrobacter vulgaris.